Reading from the N-terminus, the 528-residue chain is Probable cyclic di-GMP phosphodiesterase PdeC (528 aa).

The next 2 helical transmembrane spans lie at 14-34 (GIIF…FLWA) and 242-262 (HLIF…LLWL). The EAL domain occupies 268-520 (YLSPKRKLQR…VFMQWMEQLP (253 aa)).

It is found in the cell inner membrane. The enzyme catalyses 3',3'-c-di-GMP + H2O = 5'-phosphoguanylyl(3'-&gt;5')guanosine + H(+). Functionally, phosphodiesterase (PDE) that catalyzes the hydrolysis of cyclic-di-GMP (c-di-GMP) to 5'-pGpG. Cyclic-di-GMP is a second messenger which controls cell surface-associated traits in bacteria. Overexpression reduces biofilm formation. In Escherichia coli (strain K12), this protein is Probable cyclic di-GMP phosphodiesterase PdeC.